Consider the following 569-residue polypeptide: Urease subunit beta (569 aa).

One can recognise a Urease domain in the interval 131 to 569; the sequence is GGIDTHIHFI…VSLAQLFSIF (439 aa). Residues His136, His138, and Lys219 each coordinate Ni(2+). Position 219 is an N6-carboxylysine (Lys219). A substrate-binding site is contributed by His221. Positions 248 and 274 each coordinate Ni(2+). His322 acts as the Proton donor in catalysis. Asp362 is a Ni(2+) binding site.

This sequence belongs to the metallo-dependent hydrolases superfamily. Urease alpha subunit family. In terms of assembly, heterohexamer of 3 UreA (alpha) and 3 UreB (beta) subunits. It depends on Ni cation as a cofactor. In terms of processing, carboxylation allows a single lysine to coordinate two nickel ions.

It is found in the cytoplasm. The enzyme catalyses urea + 2 H2O + H(+) = hydrogencarbonate + 2 NH4(+). Its pathway is nitrogen metabolism; urea degradation; CO(2) and NH(3) from urea (urease route): step 1/1. The chain is Urease subunit beta from Helicobacter pylori (strain P12).